Consider the following 389-residue polypeptide: Succinate--CoA ligase [ADP-forming] subunit beta (389 aa).

An ATP-grasp domain is found at 9 to 236 (KELFAKHNVP…KDATDPLELK (228 aa)). ATP is bound by residues Lys-45, 52–54 (GRG), Ser-94, and Glu-99. Residues Asn-191 and Asp-205 each coordinate Mg(2+). Substrate-binding positions include Asn-256 and 318 to 320 (GIT).

It belongs to the succinate/malate CoA ligase beta subunit family. In terms of assembly, heterotetramer of two alpha and two beta subunits. Mg(2+) serves as cofactor.

It catalyses the reaction succinate + ATP + CoA = succinyl-CoA + ADP + phosphate. The catalysed reaction is GTP + succinate + CoA = succinyl-CoA + GDP + phosphate. Its pathway is carbohydrate metabolism; tricarboxylic acid cycle; succinate from succinyl-CoA (ligase route): step 1/1. Functionally, succinyl-CoA synthetase functions in the citric acid cycle (TCA), coupling the hydrolysis of succinyl-CoA to the synthesis of either ATP or GTP and thus represents the only step of substrate-level phosphorylation in the TCA. The beta subunit provides nucleotide specificity of the enzyme and binds the substrate succinate, while the binding sites for coenzyme A and phosphate are found in the alpha subunit. This is Succinate--CoA ligase [ADP-forming] subunit beta from Mycobacteroides abscessus (strain ATCC 19977 / DSM 44196 / CCUG 20993 / CIP 104536 / JCM 13569 / NCTC 13031 / TMC 1543 / L948) (Mycobacterium abscessus).